A 50-amino-acid chain; its full sequence is Disintegrin pyramidin-A (50 aa).

The 47-residue stretch at 1-47 folds into the Disintegrin domain; the sequence is DCASGPCCRDCKFLKEGTICKRARGDNMDDYCNGKTCDCPRNPHKGE. Intrachain disulfides connect C2-C11, C7-C32, C8-C37, and C20-C39. Positions 24-26 match the Cell attachment site motif; it reads RGD.

Belongs to the venom metalloproteinase (M12B) family. P-II subfamily. P-IIa sub-subfamily. As to quaternary structure, monomer (disintegrin). As to expression, expressed by the venom gland.

It is found in the secreted. Functionally, inhibits ADP-induced human platelet aggregation. The chain is Disintegrin pyramidin-A from Echis pyramidum leakeyi (Leakey's carpet viper).